We begin with the raw amino-acid sequence, 155 residues long: Small ribosomal subunit protein uS7 (155 aa).

Belongs to the universal ribosomal protein uS7 family. As to quaternary structure, part of the 30S ribosomal subunit. Contacts proteins S9 and S11.

Its function is as follows. One of the primary rRNA binding proteins, it binds directly to 16S rRNA where it nucleates assembly of the head domain of the 30S subunit. Is located at the subunit interface close to the decoding center, probably blocks exit of the E-site tRNA. This is Small ribosomal subunit protein uS7 from Chlorobium chlorochromatii (strain CaD3).